The chain runs to 318 residues: tRNA pseudouridine synthase B (318 aa).

The active-site Nucleophile is the aspartate 54.

This sequence belongs to the pseudouridine synthase TruB family. Type 1 subfamily.

It catalyses the reaction uridine(55) in tRNA = pseudouridine(55) in tRNA. Functionally, responsible for synthesis of pseudouridine from uracil-55 in the psi GC loop of transfer RNAs. This chain is tRNA pseudouridine synthase B, found in Ralstonia pickettii (strain 12J).